Consider the following 941-residue polypeptide: MEDNSFLKLSKKIEKILEKNDYLKKKVEQLTKSVDNHEFKIQELLLLLRKNNIHPTTTTTTTTTTNNNSTCVGISNSPPLSPRTSTDSMTNSNNSSATSSTTPSPTQTSTITTTSQIDPNSLTNSNNSFIPINSPISQTTVNNNNNNNNNNNNNNNNNNNNNNNNNNNNLNNQTITSPLSTSSSNSNSNSNSSSPIVSPVSSPQLSGSGNRPRIQFLGNGRMPSTGNLFKKEDSSDSLLKYSKDSEHLYIVPTTPRPSKSPSMDFIASTSLINTVSSNNTDSTNNDNSSILNDQQNQQQNQQQQNQQQQQEEINFITTEDKLPNLPDSNCQWAIIWEYSANDDEWTKALIIVEIDAKPFAKGALRNAYQLKIRSNAMQCFNHFATPIHEKYMEGKKLNLSQIPKLNQNLSLDTLYVAKDSKTSVNFNRYFEDVKMQMVCKSYGERYNSNHPPKKIEFLSAWVIEIQGTTNYRVGNRNSSNNTLYGLELFMKGEFKKQNSNFGTVFTERNTPQSFSHFTYECTTHEMVVVDIQGVDDIYTDPQVHTKDGKGYGEGNLGQKGIEKFLISHKCSPICLQFGLPPIGLETGRNAHRVIRGTMLLPDLTPDLYEPEYPLIENQPSNPLNSELTSIVHLSGHDERVCSLLINQDKTKLYSASADGYVKIWNLTNNEDLSKIQMIDSFRAHRRSIEKMLLNEKYLFTASSDGTIKIWSLPTTTTTTTTSKQSSSSSSSSYECIGKLEDHTAEVNDMCIDIENNFLVSCSFDKQIKIYDLSTFKCIKSLNAHGKSIKSIYMSGKYLFSSSNDQSIKIWDLEMCMCVYGMNDAHDAPITSLRMFGNRLFSASKDGEIKDWNLSTFQPTTTLDQHNMAITDILVTSNGYLFVSSDDSTIRIIDISNQNEPIKIISSTKAHRSGVNSLATDGKRIFSGGCDNLIKVWNWKNK.

The stretch at 8 to 48 forms a coiled coil; that stretch reads KLSKKIEKILEKNDYLKKKVEQLTKSVDNHEFKIQELLLLL. Low complexity-rich tracts occupy residues 57-70, 84-115, and 124-206; these read TTTT…NNST, TSTD…TTTS, and NSNN…PQLS. 2 disordered regions span residues 57-234 and 276-310; these read TTTT…KEDS and SSNN…QQQQ. Residues 289–317 adopt a coiled-coil conformation; the sequence is SILNDQQNQQQNQQQQNQQQQQEEINFIT. The region spanning 337 to 582 is the Alpha-type protein kinase domain; sequence EYSANDDEWT…ICLQFGLPPI (246 aa). WD repeat units lie at residues 635 to 674, 683 to 720, 741 to 780, 783 to 820, 824 to 861, 864 to 902, and 909 to 941; these read GHDE…DLSK, AHRR…TTTT, DHTA…CIKS, AHGK…CVYG, AHDA…PTTT, QHNM…EPIK, and AHRS…WKNK.

Belongs to the protein kinase superfamily. Alpha-type protein kinase family. ALPK subfamily.

The catalysed reaction is L-threonyl-[myosin heavy-chain] + ATP = O-phospho-L-threonyl-[myosin heavy-chain] + ADP + H(+). Functionally, phosphorylates threonine. Not critical for regulating the assembly and disassembly of myosin II filament. The sequence is that of Myosin heavy chain kinase D (mhkD) from Dictyostelium discoideum (Social amoeba).